The sequence spans 216 residues: Probable nicotinate-nucleotide adenylyltransferase (216 aa).

It belongs to the NadD family.

The catalysed reaction is nicotinate beta-D-ribonucleotide + ATP + H(+) = deamido-NAD(+) + diphosphate. Its pathway is cofactor biosynthesis; NAD(+) biosynthesis; deamido-NAD(+) from nicotinate D-ribonucleotide: step 1/1. Functionally, catalyzes the reversible adenylation of nicotinate mononucleotide (NaMN) to nicotinic acid adenine dinucleotide (NaAD). The chain is Probable nicotinate-nucleotide adenylyltransferase from Geobacter sp. (strain M21).